The primary structure comprises 168 residues: Xanthine-guanine phosphoribosyltransferase (168 aa).

5-phospho-alpha-D-ribose 1-diphosphate-binding positions include 46 to 47 and 101 to 109; these read RG and DDLVDSGVT. D102 contacts Mg(2+). D105 is a guanine binding site. D105 and V148 together coordinate xanthine. GMP is bound by residues 105 to 109 and 147 to 148; these read DSGVT and WV.

The protein belongs to the purine/pyrimidine phosphoribosyltransferase family. XGPT subfamily. As to quaternary structure, homotetramer. Mg(2+) serves as cofactor.

The protein localises to the cell inner membrane. It catalyses the reaction GMP + diphosphate = guanine + 5-phospho-alpha-D-ribose 1-diphosphate. The catalysed reaction is XMP + diphosphate = xanthine + 5-phospho-alpha-D-ribose 1-diphosphate. It carries out the reaction IMP + diphosphate = hypoxanthine + 5-phospho-alpha-D-ribose 1-diphosphate. The protein operates within purine metabolism; GMP biosynthesis via salvage pathway; GMP from guanine: step 1/1. It participates in purine metabolism; XMP biosynthesis via salvage pathway; XMP from xanthine: step 1/1. Purine salvage pathway enzyme that catalyzes the transfer of the ribosyl-5-phosphate group from 5-phospho-alpha-D-ribose 1-diphosphate (PRPP) to the N9 position of the 6-oxopurines guanine and xanthine to form the corresponding ribonucleotides GMP (guanosine 5'-monophosphate) and XMP (xanthosine 5'-monophosphate), with the release of PPi. To a lesser extent, also acts on hypoxanthine. The sequence is that of Xanthine-guanine phosphoribosyltransferase from Gluconobacter oxydans (strain 621H) (Gluconobacter suboxydans).